A 167-amino-acid polypeptide reads, in one-letter code: 6,7-dimethyl-8-ribityllumazine synthase (167 aa).

Residues phenylalanine 24, 58 to 60 (ALE), and 82 to 84 (AVV) contribute to the 5-amino-6-(D-ribitylamino)uracil site. (2S)-2-hydroxy-3-oxobutyl phosphate is bound at residue 87–88 (ET). Histidine 90 (proton donor) is an active-site residue. Asparagine 115 lines the 5-amino-6-(D-ribitylamino)uracil pocket. Arginine 129 is a (2S)-2-hydroxy-3-oxobutyl phosphate binding site.

The protein belongs to the DMRL synthase family.

The catalysed reaction is (2S)-2-hydroxy-3-oxobutyl phosphate + 5-amino-6-(D-ribitylamino)uracil = 6,7-dimethyl-8-(1-D-ribityl)lumazine + phosphate + 2 H2O + H(+). It participates in cofactor biosynthesis; riboflavin biosynthesis; riboflavin from 2-hydroxy-3-oxobutyl phosphate and 5-amino-6-(D-ribitylamino)uracil: step 1/2. Functionally, catalyzes the formation of 6,7-dimethyl-8-ribityllumazine by condensation of 5-amino-6-(D-ribitylamino)uracil with 3,4-dihydroxy-2-butanone 4-phosphate. This is the penultimate step in the biosynthesis of riboflavin. This is 6,7-dimethyl-8-ribityllumazine synthase from Cupriavidus pinatubonensis (strain JMP 134 / LMG 1197) (Cupriavidus necator (strain JMP 134)).